A 429-amino-acid polypeptide reads, in one-letter code: Histidine--tRNA ligase (429 aa).

It belongs to the class-II aminoacyl-tRNA synthetase family. As to quaternary structure, homodimer.

Its subcellular location is the cytoplasm. The catalysed reaction is tRNA(His) + L-histidine + ATP = L-histidyl-tRNA(His) + AMP + diphosphate + H(+). This Pseudomonas paraeruginosa (strain DSM 24068 / PA7) (Pseudomonas aeruginosa (strain PA7)) protein is Histidine--tRNA ligase.